A 608-amino-acid polypeptide reads, in one-letter code: Isocitrate dehydrogenase kinase/phosphatase (608 aa).

ATP-binding positions include 327–333 (APGIKGL) and K348. Residue D383 is part of the active site. The disordered stretch occupies residues 589–608 (FDSTPDAGDGDSAGDAQRAA).

It belongs to the AceK family.

The protein resides in the cytoplasm. The catalysed reaction is L-seryl-[isocitrate dehydrogenase] + ATP = O-phospho-L-seryl-[isocitrate dehydrogenase] + ADP + H(+). Bifunctional enzyme which can phosphorylate or dephosphorylate isocitrate dehydrogenase (IDH) on a specific serine residue. This is a regulatory mechanism which enables bacteria to bypass the Krebs cycle via the glyoxylate shunt in response to the source of carbon. When bacteria are grown on glucose, IDH is fully active and unphosphorylated, but when grown on acetate or ethanol, the activity of IDH declines drastically concomitant with its phosphorylation. The protein is Isocitrate dehydrogenase kinase/phosphatase of Burkholderia ambifaria (strain MC40-6).